A 448-amino-acid polypeptide reads, in one-letter code: Trigger factor (448 aa).

In terms of domain architecture, PPIase FKBP-type spans 172-257 (GDRVTVDFVG…MKKIEWPHLP (86 aa)).

Belongs to the FKBP-type PPIase family. Tig subfamily.

The protein resides in the cytoplasm. The catalysed reaction is [protein]-peptidylproline (omega=180) = [protein]-peptidylproline (omega=0). Functionally, involved in protein export. Acts as a chaperone by maintaining the newly synthesized protein in an open conformation. Functions as a peptidyl-prolyl cis-trans isomerase. The protein is Trigger factor of Paraburkholderia phymatum (strain DSM 17167 / CIP 108236 / LMG 21445 / STM815) (Burkholderia phymatum).